An 89-amino-acid chain; its full sequence is Large ribosomal subunit protein bL27 (89 aa).

The disordered stretch occupies residues 1–22 (MAQKKAGGSSRNGRDSAGRRLG).

It belongs to the bacterial ribosomal protein bL27 family.

The sequence is that of Large ribosomal subunit protein bL27 from Gluconacetobacter diazotrophicus (strain ATCC 49037 / DSM 5601 / CCUG 37298 / CIP 103539 / LMG 7603 / PAl5).